The chain runs to 159 residues: HSP70 co-chaperone SNL1 (159 aa).

Over 1-12 (MSHNAMEHWKSK) the chain is Perinuclear space. The chain crosses the membrane as a helical; Signal-anchor for type II membrane protein span at residues 13-35 (LSKTSTSTYVLLAVIAVVFLVTI). Topologically, residues 36 to 159 (RRPNGSKGKS…AMLKSLDSLK (124 aa)) are cytoplasmic. A disordered region spans residues 39–64 (NGSKGKSSKKRASKKNKKGKNQFEKA). Positions 44 to 58 (KSSKKRASKKNKKGK) are enriched in basic residues. Positions 73-159 (QIDNVSLRYG…AMLKSLDSLK (87 aa)) constitute a BAG domain.

In terms of assembly, interacts with the HSP70 family members SSA1, SSA4, and SSB1. These interactions are strongly reduced by ADP and ATP.

Its subcellular location is the endoplasmic reticulum membrane. The protein resides in the nucleus membrane. Its function is as follows. Stimulator of ATPase activity of molecular chaperones of the HSP70 family (principally of the SSA class). Stimulation is important for HSP70-substrate complex dissociation after folding of newly synthesized or refolded proteins. SNL1 is probably involved in nuclear pore biogenesis and in particular the folding or refolding of misfolded NUP116, GLE2 and NIC96. The polypeptide is HSP70 co-chaperone SNL1 (SNL1) (Saccharomyces cerevisiae (strain ATCC 204508 / S288c) (Baker's yeast)).